A 545-amino-acid chain; its full sequence is O-phosphoserine--tRNA(Cys) ligase (545 aa).

Substrate contacts are provided by residues 189–191 (HMT), 234–236 (SAS), 276–277 (YY), and Asn328.

This sequence belongs to the class-II aminoacyl-tRNA synthetase family. O-phosphoseryl-tRNA(Cys) synthetase subfamily. In terms of assembly, homotetramer. Interacts with SepCysS.

The catalysed reaction is tRNA(Cys) + O-phospho-L-serine + ATP = O-phospho-L-seryl-tRNA(Cys) + AMP + diphosphate. Its function is as follows. Catalyzes the attachment of O-phosphoserine (Sep) to tRNA(Cys). The chain is O-phosphoserine--tRNA(Cys) ligase from Methanothrix thermoacetophila (strain DSM 6194 / JCM 14653 / NBRC 101360 / PT) (Methanosaeta thermophila).